The chain runs to 769 residues: Phosphatidylinositol 4-phosphate 5-kinase 8 (769 aa).

8 MORN repeats span residues 16–38 (YSGQLKGTLPHGKGKYAWPDGII), 39–61 (YEGDWEEGKISGRGKLMWSSGAK), 62–84 (YEGDFSGGYLHGFGTLTSPDGSV), 85–107 (YAGAWRMNVRHGLGRKEYCNSDV), 108–130 (YDGSWREGLQDGSGSYSWYNGNR), 131–153 (FIGNWKKGKMSGRGVMSWANGDL), 154–176 (FNGFWLNGLRHGSGVYKYADGGF), and 177–198 (YFGTWSRGLKDGSGVFYPAGSK). The disordered stretch occupies residues 266 to 289 (PPRDFMHHGPSSKSARSVDSGQSE). The span at 276–288 (SSKSARSVDSGQS) shows a compositional bias: polar residues. The region spanning 344–765 (WNHYLMLNLQ…RFIDFLLKVF (422 aa)) is the PIPK domain. Residues 725–746 (YNMKKKVEHTCKSMKYDPMTIS) are activation loop.

The enzyme catalyses a 1,2-diacyl-sn-glycero-3-phospho-(1D-myo-inositol 4-phosphate) + ATP = a 1,2-diacyl-sn-glycero-3-phospho-(1D-myo-inositol-4,5-bisphosphate) + ADP + H(+). The sequence is that of Phosphatidylinositol 4-phosphate 5-kinase 8 (PIP5K8) from Arabidopsis thaliana (Mouse-ear cress).